A 119-amino-acid polypeptide reads, in one-letter code: Evasin P983 (119 aa).

Positions methionine 1–alanine 21 are cleaved as a signal peptide. Disulfide bonds link cysteine 37-cysteine 59, cysteine 55-cysteine 97, cysteine 72-cysteine 102, and cysteine 92-cysteine 111. 2 N-linked (GlcNAc...) asparagine glycosylation sites follow: asparagine 48 and asparagine 67.

The protein resides in the secreted. Salivary chemokine-binding protein which binds to host chemokines CCL2, CCL3 and CCL8. The chain is Evasin P983 from Amblyomma cajennense (Cayenne tick).